A 21-amino-acid polypeptide reads, in one-letter code: Natriuretic peptide TsNP (21 aa).

A disulfide bridge links C5 with C21.

Expressed by the venom gland.

The protein localises to the secreted. Its function is as follows. Scorpion venom natriuretic peptide that increases the perfusion pressure, glomerular filtration rate and urinary flow in the isolated perfused rat kidney assay. Induces a decrease of the percentages of renal transport for sodium, potassium and chloride and an increase of the urinary cGMP concentration. Also down-regulates the mRNA expression of natriuretic peptide receptor 1 (NPR1) in the kidneys whereas it up-regulates those of NPR2, NPR3 and guanylyl cyclase C (GUCY2C) mRNAs. May exhibit hypotensive and vasodepressor activities. The polypeptide is Natriuretic peptide TsNP (Tityus serrulatus (Brazilian scorpion)).